The following is a 205-amino-acid chain: N-(5'-phosphoribosyl)anthranilate isomerase (205 aa).

Belongs to the TrpF family.

It carries out the reaction N-(5-phospho-beta-D-ribosyl)anthranilate = 1-(2-carboxyphenylamino)-1-deoxy-D-ribulose 5-phosphate. It participates in amino-acid biosynthesis; L-tryptophan biosynthesis; L-tryptophan from chorismate: step 3/5. This Clostridium acetobutylicum (strain ATCC 824 / DSM 792 / JCM 1419 / IAM 19013 / LMG 5710 / NBRC 13948 / NRRL B-527 / VKM B-1787 / 2291 / W) protein is N-(5'-phosphoribosyl)anthranilate isomerase.